The chain runs to 559 residues: Innexin-10 (559 aa).

The next 4 membrane-spanning stretches (helical) occupy residues 28–48 (YFTC…QFGG), 102–122 (QWVP…SLLW), 182–202 (FLWL…YLCT), and 283–303 (IFIL…GSFF). Disordered regions lie at residues 488-514 (EEKQ…YQNQ) and 527-559 (YRTP…STFK). Positions 503 to 514 (YTNQNPTPYQNQ) are enriched in low complexity. Polar residues predominate over residues 528–559 (RTPSLSRGTDSRPVSTATDTDQTKKQSMSTFK).

The protein belongs to the pannexin family.

The protein resides in the cell membrane. It is found in the cell junction. The protein localises to the gap junction. In terms of biological role, structural component of the gap junctions. The protein is Innexin-10 (inx-10) of Caenorhabditis elegans.